Consider the following 166-residue polypeptide: MSKIESQAGELQEKLVAVNRVSKVVKGGRIFSFTALTVVGDGSGRVGFGYGKAREVPAAIQKAMEQARRNMVKVELIEGTLHHHVKGTHAGSTVFMQPASQGTGIIAGGAMRAVLEVAGVHNVLAKTYGSTNPMNVVRATIEALADIKSPEQVAAKRGLRVEEILG.

The region spanning 11 to 74 is the S5 DRBM domain; it reads LQEKLVAVNR…EQARRNMVKV (64 aa).

Belongs to the universal ribosomal protein uS5 family. As to quaternary structure, part of the 30S ribosomal subunit. Contacts proteins S4 and S8.

In terms of biological role, with S4 and S12 plays an important role in translational accuracy. Located at the back of the 30S subunit body where it stabilizes the conformation of the head with respect to the body. The sequence is that of Small ribosomal subunit protein uS5 from Tolumonas auensis (strain DSM 9187 / NBRC 110442 / TA 4).